Here is a 224-residue protein sequence, read N- to C-terminus: 7-cyano-7-deazaguanine synthase (224 aa).

8 to 18 (LSGGMDSAAVI) contributes to the ATP binding site. Residues Cys-186, Cys-196, Cys-199, and Cys-202 each contribute to the Zn(2+) site.

Belongs to the QueC family. It depends on Zn(2+) as a cofactor.

The catalysed reaction is 7-carboxy-7-deazaguanine + NH4(+) + ATP = 7-cyano-7-deazaguanine + ADP + phosphate + H2O + H(+). The protein operates within purine metabolism; 7-cyano-7-deazaguanine biosynthesis. Functionally, catalyzes the ATP-dependent conversion of 7-carboxy-7-deazaguanine (CDG) to 7-cyano-7-deazaguanine (preQ(0)). This Xanthomonas oryzae pv. oryzae (strain MAFF 311018) protein is 7-cyano-7-deazaguanine synthase.